The primary structure comprises 289 residues: 4-hydroxy-3-methylbut-2-enyl diphosphate reductase (289 aa).

A [4Fe-4S] cluster-binding site is contributed by Cys13. (2E)-4-hydroxy-3-methylbut-2-enyl diphosphate-binding residues include His42 and His76. Dimethylallyl diphosphate contacts are provided by His42 and His76. Isopentenyl diphosphate is bound by residues His42 and His76. Cys98 is a [4Fe-4S] cluster binding site. Residue His130 coordinates (2E)-4-hydroxy-3-methylbut-2-enyl diphosphate. His130 is a dimethylallyl diphosphate binding site. His130 is a binding site for isopentenyl diphosphate. Residue Glu132 is the Proton donor of the active site. Thr168 serves as a coordination point for (2E)-4-hydroxy-3-methylbut-2-enyl diphosphate. A [4Fe-4S] cluster-binding site is contributed by Cys199. (2E)-4-hydroxy-3-methylbut-2-enyl diphosphate is bound by residues Ser227, Ser228, Asn229, and Ser272. Dimethylallyl diphosphate is bound by residues Ser227, Ser228, Asn229, and Ser272. Ser227, Ser228, Asn229, and Ser272 together coordinate isopentenyl diphosphate.

It belongs to the IspH family. [4Fe-4S] cluster is required as a cofactor.

The catalysed reaction is isopentenyl diphosphate + 2 oxidized [2Fe-2S]-[ferredoxin] + H2O = (2E)-4-hydroxy-3-methylbut-2-enyl diphosphate + 2 reduced [2Fe-2S]-[ferredoxin] + 2 H(+). The enzyme catalyses dimethylallyl diphosphate + 2 oxidized [2Fe-2S]-[ferredoxin] + H2O = (2E)-4-hydroxy-3-methylbut-2-enyl diphosphate + 2 reduced [2Fe-2S]-[ferredoxin] + 2 H(+). It functions in the pathway isoprenoid biosynthesis; dimethylallyl diphosphate biosynthesis; dimethylallyl diphosphate from (2E)-4-hydroxy-3-methylbutenyl diphosphate: step 1/1. The protein operates within isoprenoid biosynthesis; isopentenyl diphosphate biosynthesis via DXP pathway; isopentenyl diphosphate from 1-deoxy-D-xylulose 5-phosphate: step 6/6. In terms of biological role, catalyzes the conversion of 1-hydroxy-2-methyl-2-(E)-butenyl 4-diphosphate (HMBPP) into a mixture of isopentenyl diphosphate (IPP) and dimethylallyl diphosphate (DMAPP). Acts in the terminal step of the DOXP/MEP pathway for isoprenoid precursor biosynthesis. This chain is 4-hydroxy-3-methylbut-2-enyl diphosphate reductase, found in Porphyromonas gingivalis (strain ATCC BAA-308 / W83).